Here is a 201-residue protein sequence, read N- to C-terminus: Recombination protein RecR (201 aa).

Residues 57 to 72 (CTHCRTFTEEESCAIC) form a C4-type zinc finger. A Toprim domain is found at 81–176 (GFLCVVEQPS…KVSRIAHGIP (96 aa)).

The protein belongs to the RecR family.

Functionally, may play a role in DNA repair. It seems to be involved in an RecBC-independent recombinational process of DNA repair. It may act with RecF and RecO. The sequence is that of Recombination protein RecR from Histophilus somni (strain 129Pt) (Haemophilus somnus).